A 905-amino-acid polypeptide reads, in one-letter code: Stonin-2 (905 aa).

Disordered regions lie at residues 1-121, 178-205, and 244-263; these read MTTL…HQET, EQTSGQASGADSTDNSSSLQEDEEVEME, and LPPVTSPLKPNTPPSASVIP. Residues 40–50 show a composition bias toward low complexity; sequence SSSPDQSESSS. The span at 60–73 shows a compositional bias: basic and acidic residues; sequence SQDHSHSEQDDSSE. Residues 85–94 are compositionally biased toward pro residues; the sequence is PGSPEQPPPD. A compositionally biased stretch (polar residues) spans 178–196; the sequence is EQTSGQASGADSTDNSSSL. Over residues 244–256 the composition is skewed to pro residues; that stretch reads LPPVTSPLKPNTP. Phosphothreonine is present on Thr-255. Residues Ser-281, Ser-287, and Ser-302 each carry the phosphoserine modification. 2 consecutive short sequence motifs (NPF) follow at residues 313–315 and 329–331; these read NPF. One can recognise an SHD domain in the interval 427 to 560; sequence GWPMMLRIPE…DLPVLSMDLS (134 aa). In terms of domain architecture, MHD spans 568-878; sequence EEEITVDVRD…SYQVALGSIW (311 aa). The residue at position 762 (Ser-762) is a Phosphoserine.

It belongs to the Stoned B family. As to quaternary structure, interacts with the second C2 domain of synaptotagmins SYT1 and SYT2. Interacts with EPS15, EPS15R and ITSN1. Interacts indirectly with the AP-2 adapter complex. Interacts with TOR1A and COPS4; the interaction controls STON2 protein stability. Post-translationally, phosphorylated in vitro by PKD. In terms of processing, neddylated; deneddylated via its interaction with the COP9 signalosome (CSN) complex through TOR1A and COPS4. Ubiquitinated; leading to its degradation. Ubiquitous.

The protein resides in the cytoplasm. The protein localises to the membrane. It localises to the synapse. Its subcellular location is the synaptosome. Its function is as follows. Adapter protein involved in endocytic machinery. Involved in the synaptic vesicle recycling. May facilitate clathrin-coated vesicle uncoating. This is Stonin-2 (STON2) from Homo sapiens (Human).